A 401-amino-acid polypeptide reads, in one-letter code: UPF0283 membrane protein SO_1811 (401 aa).

The disordered stretch occupies residues Met1–Ser22. The next 3 helical transmembrane spans lie at Leu99–Leu119, Leu129–Ile149, and Glu239–Trp259.

This sequence belongs to the UPF0283 family.

The protein localises to the cell inner membrane. The protein is UPF0283 membrane protein SO_1811 of Shewanella oneidensis (strain ATCC 700550 / JCM 31522 / CIP 106686 / LMG 19005 / NCIMB 14063 / MR-1).